Consider the following 373-residue polypeptide: S-adenosylmethionine:tRNA ribosyltransferase-isomerase (373 aa).

Belongs to the QueA family. In terms of assembly, monomer.

The protein resides in the cytoplasm. It carries out the reaction 7-aminomethyl-7-carbaguanosine(34) in tRNA + S-adenosyl-L-methionine = epoxyqueuosine(34) in tRNA + adenine + L-methionine + 2 H(+). The protein operates within tRNA modification; tRNA-queuosine biosynthesis. Transfers and isomerizes the ribose moiety from AdoMet to the 7-aminomethyl group of 7-deazaguanine (preQ1-tRNA) to give epoxyqueuosine (oQ-tRNA). The sequence is that of S-adenosylmethionine:tRNA ribosyltransferase-isomerase from Caulobacter sp. (strain K31).